The chain runs to 341 residues: Tetraacyldisaccharide 4'-kinase (341 aa).

An ATP-binding site is contributed by 54–61 (TVGGAGKT).

The protein belongs to the LpxK family.

It catalyses the reaction a lipid A disaccharide + ATP = a lipid IVA + ADP + H(+). It participates in glycolipid biosynthesis; lipid IV(A) biosynthesis; lipid IV(A) from (3R)-3-hydroxytetradecanoyl-[acyl-carrier-protein] and UDP-N-acetyl-alpha-D-glucosamine: step 6/6. Functionally, transfers the gamma-phosphate of ATP to the 4'-position of a tetraacyldisaccharide 1-phosphate intermediate (termed DS-1-P) to form tetraacyldisaccharide 1,4'-bis-phosphate (lipid IVA). The polypeptide is Tetraacyldisaccharide 4'-kinase (Brucella melitensis biotype 2 (strain ATCC 23457)).